Here is a 1253-residue protein sequence, read N- to C-terminus: Latent-transforming growth factor beta-binding protein 3 (1253 aa).

An N-terminal signal peptide occupies residues 1-38; that stretch reads MPGPRGAAHGLAPAMRQAGALGLLALLLLALLGPGGGA. N-linked (GlcNAc...) asparagine glycosylation is present at asparagine 86. Residues 106-138 enclose the EGF-like 1 domain; it reads RVVVCPLPCMNGGQCSSRNQCLCPPDFTGRFCQ. Disulfide bonds link cysteine 110/cysteine 120, cysteine 114/cysteine 126, and cysteine 128/cysteine 137. The segment at 244-270 is disordered; sequence GPNAEGPASSQHLLPHPKPQHPRPPTQ. The TB 1 domain occupies 274–328; the sequence is GRCFQDTLPKQPCGSNPLPGLTKQEDCCGSIGTAWGQSKCHKCPQLQYTGVQKPG. 3 disulfides stabilise this stretch: cysteine 276–cysteine 300, cysteine 286–cysteine 313, and cysteine 301–cysteine 316. The N-linked (GlcNAc...) asparagine glycan is linked to asparagine 346. The 41-residue stretch at 352–392 folds into the EGF-like 2; calcium-binding domain; it reads DINECAMPGMCRHGDCLNNPGSYRCVCPPGHSLGPSRTQCI. Intrachain disulfides connect cysteine 356/cysteine 367, cysteine 362/cysteine 376, cysteine 378/cysteine 391, cysteine 402/cysteine 425, cysteine 412/cysteine 437, cysteine 426/cysteine 440, and cysteine 427/cysteine 452. A TB 2 domain is found at 400–452; the sequence is SLCFRLVSTEHQCQHPLTTRLTRQLCCCSVGKAWGARCQRCPADGTAAFKEIC. Positions 475 to 555 are disordered; that stretch reads FSLFLHPDGP…PTFHRFLPDL (81 aa). One can recognise an EGF-like 3 domain in the interval 571–612; sequence ETDECRLNQNICGHGQCVPGPSDYSCHCNAGYRSHPQHRYCV. 32 disulfide bridges follow: cysteine 575-cysteine 587, cysteine 582-cysteine 596, cysteine 598-cysteine 611, cysteine 617-cysteine 629, cysteine 622-cysteine 638, cysteine 661-cysteine 673, cysteine 667-cysteine 682, cysteine 684-cysteine 698, cysteine 745-cysteine 756, cysteine 751-cysteine 765, cysteine 767-cysteine 780, cysteine 786-cysteine 797, cysteine 792-cysteine 806, cysteine 808-cysteine 821, cysteine 827-cysteine 838, cysteine 833-cysteine 847, cysteine 849-cysteine 861, cysteine 867-cysteine 880, cysteine 874-cysteine 889, cysteine 891-cysteine 904, cysteine 916-cysteine 939, cysteine 926-cysteine 951, cysteine 940-cysteine 956, cysteine 941-cysteine 968, cysteine 994-cysteine 1007, cysteine 1002-cysteine 1016, cysteine 1018-cysteine 1031, cysteine 1037-cysteine 1048, cysteine 1043-cysteine 1057, cysteine 1059-cysteine 1072, cysteine 1113-cysteine 1127, and cysteine 1114-cysteine 1136. Residues 613 to 656 enclose the EGF-like 4; calcium-binding domain; it reads DVNECEAEPCGPGKGICMNTGGSYNCHCNRGYRLHVGAGGRSCV. One can recognise an EGF-like 5; calcium-binding domain in the interval 657 to 699; it reads DLNECTKPHLCGDGGFCINFPGHYKCNCYPGYRLKASRPPICE. The EGF-like 6; calcium-binding domain occupies 741–781; it reads DVNECSEGTPCSPGWCENLPGSYRCTCAQGYEPAQDGLSCI. Positions 782-822 constitute an EGF-like 7; calcium-binding domain; the sequence is DVDECEAGKVCQDGICTNTPGSFQCQCLSGYHLSRDRSRCE. In terms of domain architecture, EGF-like 8; calcium-binding spans 823-861; the sequence is DIDECDFPAACIGGDCINTNGSYRCLCPQGHRLVGGRKC. N-linked (GlcNAc...) asparagine glycosylation is present at asparagine 842. Residues 863 to 905 enclose the EGF-like 9; calcium-binding domain; that stretch reads DIDECSQDPGLCLPHGACENLQGSYVCVCDEGFTLTQDQHGCE. In terms of domain architecture, TB 3 spans 914 to 968; that stretch reads KECYLNFDDTVFCDSVLATNVTQQECCCSLGAGWGDHCEIYPCPVYSSAEFHSLC. Asparagine 933 carries an N-linked (GlcNAc...) asparagine glycan. In terms of domain architecture, EGF-like 10; calcium-binding spans 990 to 1032; it reads DIDECILFGAEICKEGKCVNTQPGYECYCKQGFYYDGNLLECV. One can recognise an EGF-like 11; calcium-binding domain in the interval 1033–1072; the sequence is DVDECLDESNCRNGVCENTRGGYRCACTPPAEYSPAQRQC. One can recognise a TB 4 domain in the interval 1086 to 1136; the sequence is EVCWGQRGEDGMCMGPLAGPALTFDDCCCRQGRGWGTQCRPCPPRGTGSQC. Residues 1138–1148 are compositionally biased toward polar residues; it reads TSQSESNSFWD. The segment at 1138 to 1169 is disordered; that stretch reads TSQSESNSFWDTSPLLLGKSPRDEDSSEEDSD. The region spanning 1204–1231 is the EGF-like 12; calcium-binding domain; sequence DIDECRELNQRGLLCKSERCVNTSGSFR. 2 disulfide bridges follow: cysteine 1208-cysteine 1223 and cysteine 1218-cysteine 1232. Asparagine 1225 carries an N-linked (GlcNAc...) asparagine glycan.

The protein belongs to the LTBP family. In terms of assembly, forms part of the large latent transforming growth factor beta (TGFB1) precursor complex; removal is essential for activation of complex. Interacts with EFEMP2. Post-translationally, contains hydroxylated asparagine residues. Two intrachain disulfide bonds from the TB3 domain are rearranged upon TGFB1 binding, and form interchain bonds with TGFB1 propeptide, anchoring it to the extracellular matrix.

It localises to the secreted. Its subcellular location is the extracellular space. It is found in the extracellular matrix. In terms of biological role, key regulator of transforming growth factor beta (TGFB1, TGFB2 and TGFB3) that controls TGF-beta activation by maintaining it in a latent state during storage in extracellular space. Associates specifically via disulfide bonds with the Latency-associated peptide (LAP), which is the regulatory chain of TGF-beta, and regulates integrin-dependent activation of TGF-beta. This chain is Latent-transforming growth factor beta-binding protein 3 (Ltbp3), found in Mus musculus (Mouse).